The primary structure comprises 242 residues: Proteasome subunit alpha (242 aa).

It belongs to the peptidase T1A family. As to quaternary structure, the 20S proteasome core is composed of 14 alpha and 14 beta subunits that assemble into four stacked heptameric rings, resulting in a barrel-shaped structure. The two inner rings, each composed of seven catalytic beta subunits, are sandwiched by two outer rings, each composed of seven alpha subunits. The catalytic chamber with the active sites is on the inside of the barrel. Has a gated structure, the ends of the cylinder being occluded by the N-termini of the alpha-subunits. Is capped by the proteasome-associated ATPase, ARC.

The protein resides in the cytoplasm. The protein operates within protein degradation; proteasomal Pup-dependent pathway. The formation of the proteasomal ATPase ARC-20S proteasome complex, likely via the docking of the C-termini of ARC into the intersubunit pockets in the alpha-rings, may trigger opening of the gate for substrate entry. Interconversion between the open-gate and close-gate conformations leads to a dynamic regulation of the 20S proteasome proteolysis activity. Component of the proteasome core, a large protease complex with broad specificity involved in protein degradation. This chain is Proteasome subunit alpha, found in Renibacterium salmoninarum (strain ATCC 33209 / DSM 20767 / JCM 11484 / NBRC 15589 / NCIMB 2235).